Consider the following 67-residue polypeptide: Peptide Hp1239 (67 aa).

The N-terminal stretch at 1-23 is a signal peptide; sequence MKTQFTVLLITLVLFQMLSQSEA. A Phenylalanine amide modification is found at F36. A propeptide spanning residues 40-67 is cleaved from the precursor; the sequence is GLSDLSDLDELFDGEITKADLDLLREIM.

It belongs to the non-disulfide-bridged peptide (NDBP) superfamily. Short antimicrobial peptide (group 4) family. As to expression, expressed by the venom gland.

It is found in the secreted. Its subcellular location is the target cell membrane. Amphipathic peptide with antibacterial activities. Shows antiviral activities against the herpes simplex virus type-1. It potently inhibits the initial infection by provoking the rupture of viral envelop and the dissociation of proteins from the virions (EC(50) is 0.41 uM). It also effectively inhibits viral attachment (EC(50) is 5.73 uM), viral entry (EC(50) is 4.32 uM) and viral proliferation after infection (EC(50) is 8.41 uM). Morever, it enters mammalian tested cells (Vero) and reduces the intracellular infectivity. This Heterometrus petersii (Asian forest scorpion) protein is Peptide Hp1239.